The chain runs to 362 residues: Dihydroorotate dehydrogenase (quinone) (362 aa).

FMN-binding positions include 62 to 66 (AGYDK) and threonine 86. Residue lysine 66 participates in substrate binding. 111-115 (NRLGF) serves as a coordination point for substrate. Asparagine 139 and asparagine 170 together coordinate FMN. A substrate-binding site is contributed by asparagine 170. Serine 173 acts as the Nucleophile in catalysis. Asparagine 175 serves as a coordination point for substrate. Lysine 215 and serine 243 together coordinate FMN. Substrate is bound at residue 244 to 245 (NT). FMN contacts are provided by residues glycine 266, glycine 295, and 316-317 (YS).

It belongs to the dihydroorotate dehydrogenase family. Type 2 subfamily. As to quaternary structure, monomer. FMN is required as a cofactor.

It is found in the cell membrane. It catalyses the reaction (S)-dihydroorotate + a quinone = orotate + a quinol. It participates in pyrimidine metabolism; UMP biosynthesis via de novo pathway; orotate from (S)-dihydroorotate (quinone route): step 1/1. Its function is as follows. Catalyzes the conversion of dihydroorotate to orotate with quinone as electron acceptor. The sequence is that of Dihydroorotate dehydrogenase (quinone) from Sinorhizobium fredii (strain NBRC 101917 / NGR234).